A 489-amino-acid polypeptide reads, in one-letter code: Rhamnulokinase (489 aa).

13-17 lines the ATP pocket; that stretch reads ASSGR. Cys-68 and Cys-222 are oxidised to a cystine. Residues Gly-83 and 236–238 contribute to the substrate site; that span reads HDT. The active-site Proton acceptor is Asp-237. Thr-259 provides a ligand contact to ATP. Asn-296 is a binding site for substrate. Gln-304 lines the ATP pocket. Cys-353 and Cys-370 are joined by a disulfide. Gly-402 provides a ligand contact to ATP. An intrachain disulfide couples Cys-413 to Cys-417.

This sequence belongs to the rhamnulokinase family. Requires Mg(2+) as cofactor.

The enzyme catalyses L-rhamnulose + ATP = L-rhamnulose 1-phosphate + ADP + H(+). It functions in the pathway carbohydrate degradation; L-rhamnose degradation; glycerone phosphate from L-rhamnose: step 2/3. Its function is as follows. Involved in the catabolism of L-rhamnose (6-deoxy-L-mannose). Catalyzes the transfer of the gamma-phosphate group from ATP to the 1-hydroxyl group of L-rhamnulose to yield L-rhamnulose 1-phosphate. This chain is Rhamnulokinase, found in Enterobacter sp. (strain 638).